The chain runs to 464 residues: Isthmin-1 (464 aa).

A signal peptide spans 1 to 29 (MVRLAAELLLLLGLLLLTLHITVLRGSGA). N39 carries an N-linked (GlcNAc...) asparagine glycan. Disordered stretches follow at residues 50 to 98 (NVGS…LQRD), 135 to 155 (PDSE…SVPS), and 173 to 219 (SGDQ…STDG). Residues 51-63 (VGSDTTSETSFSL) are compositionally biased toward polar residues. Composition is skewed to basic and acidic residues over residues 66 to 76 (EAPREHLDHQA) and 138 to 147 (EADKDQHPEN). A TSP type-1 domain is found at 218–262 (DGEGDWSLWSVCSVTCGNGNQKRTRSCGYACTATESRTCDRPNCP). Cystine bridges form between C229–C256, C233–C261, and C244–C248. The 164-residue stretch at 289-452 (LFEVDTDSCE…QKCTESPSDE (164 aa)) folds into the AMOP domain.

The protein belongs to the isthmin family. In terms of assembly, interacts with integrin ITGAV/ITGB5.

It localises to the secreted. Functionally, acts as an angiogenesis inhibitor. This chain is Isthmin-1 (ISM1), found in Homo sapiens (Human).